Reading from the N-terminus, the 444-residue chain is MTRKYFGTDGVRGTVGEFPITPDFVLKLGWAAGKVLGARGGSKILIGKDTRISGYMFESALEAGISAAGVDVRLLGPLPTPGIAYLTRTLSAQAGIVISASHNPYTDNGIKFFGADGRKLNDEIELEIERLLDEQMSVVSTDQIGKVRRIDDARGRYIEFCKSTAPGLDLNGMKIVVDTANGAAYHIAPDVFEELGATVVPLANQPDGFNINRDCGSTHPEALQRKVVEEKADLGVALDGDADRLLMVDHAGNLVDGDQLLFVVARDRKENGAEMDGVVGTLMSNFGLELALQAEGIEFVRAKVGDRYVMEQLDKRGWNIGGESSGHLVCLDCTTTGDGTVSALQVLAALSRRKQGLAESVADVSMLPQKMINVRGPNRDGFMENGDVQAAMADVEDRLAGNGRILLRPSGTEPLVRVMIEGKDVDRVESLCRELAEVVEKAIN.

Serine 101 acts as the Phosphoserine intermediate in catalysis. Mg(2+) is bound by residues serine 101, aspartate 239, aspartate 241, and aspartate 243. A Phosphoserine modification is found at serine 101.

Belongs to the phosphohexose mutase family. The cofactor is Mg(2+). Activated by phosphorylation.

The enzyme catalyses alpha-D-glucosamine 1-phosphate = D-glucosamine 6-phosphate. Catalyzes the conversion of glucosamine-6-phosphate to glucosamine-1-phosphate. The protein is Phosphoglucosamine mutase of Alcanivorax borkumensis (strain ATCC 700651 / DSM 11573 / NCIMB 13689 / SK2).